Here is a 102-residue protein sequence, read N- to C-terminus: DET1- and DDB1-associated protein 1 (102 aa).

The interval 67–102 (NAAKKRDQEQVEIEGENSAPPRKIARTDSQDMNEDT) is disordered.

The protein belongs to the DDA1 family. Component of numerous DCX (DDB1-CUL4-X-box) E3 ubiquitin-protein ligase complexes which consist of a core of DDB1, cullin-4 (CUL4A or CUL4B), DDA1 and RBX1.

The protein operates within protein modification; protein ubiquitination. Its function is as follows. Functions as a component of numerous distinct DCX (DDB1-CUL4-X-box) E3 ubiquitin-protein ligase complexes which mediate the ubiquitination and subsequent proteasomal degradation of target proteins. In the DCX complexes, acts as a scaffolding subunit required to stabilize the complex. The chain is DET1- and DDB1-associated protein 1 from Gallus gallus (Chicken).